We begin with the raw amino-acid sequence, 150 residues long: Arginine repressor (150 aa).

The protein belongs to the ArgR family.

The protein localises to the cytoplasm. It functions in the pathway amino-acid biosynthesis; L-arginine biosynthesis [regulation]. In terms of biological role, regulates arginine biosynthesis genes. The polypeptide is Arginine repressor (Staphylococcus carnosus (strain TM300)).